The sequence spans 539 residues: Oviduct-specific glycoprotein (539 aa).

An N-terminal signal peptide occupies residues 1–21 (MGKLLLWVGLLLMLKHHDGAA). The 364-residue stretch at 22 to 385 (HKLVCYFTNW…HTLNNLLVND (364 aa)) folds into the GH18 domain. A disulfide bridge links Cys26 with Cys51. Chitin contacts are provided by residues 71–72 (PL), 98–101 (GGWN), Tyr142, 211–214 (LSYD), and Trp355. Residue Asn402 is glycosylated (N-linked (GlcNAc...) asparagine). Disordered stretches follow at residues 433-480 (TETH…KPLT) and 503-539 (QKVT…LERL). Positions 440–457 (ATMTTTPRGETATPTRTP) are enriched in low complexity.

Belongs to the glycosyl hydrolase 18 family. Oviduct.

The protein localises to the cytoplasmic vesicle. The protein resides in the secretory vesicle. In terms of biological role, binds to oocyte zona pellucida in vivo. May play a role in the fertilization process and/or early embryonic development. The protein is Oviduct-specific glycoprotein (OVGP1) of Ovis aries (Sheep).